The sequence spans 453 residues: Tol-Pal system protein TolB (453 aa).

The N-terminal stretch at 1–31 (MINNLSISMTKVIKIILAIIIILFNTLSIFA) is a signal peptide.

Belongs to the TolB family. As to quaternary structure, the Tol-Pal system is composed of five core proteins: the inner membrane proteins TolA, TolQ and TolR, the periplasmic protein TolB and the outer membrane protein Pal. They form a network linking the inner and outer membranes and the peptidoglycan layer.

The protein localises to the periplasm. Its function is as follows. Part of the Tol-Pal system, which plays a role in outer membrane invagination during cell division and is important for maintaining outer membrane integrity. The polypeptide is Tol-Pal system protein TolB (Orientia tsutsugamushi (strain Ikeda) (Rickettsia tsutsugamushi)).